A 249-amino-acid polypeptide reads, in one-letter code: MNEVIKSLTDHRSIRSYTDEPVAQEQLDQIIEAVQSAPSSINGQQVTVITVQDKERKKKISELAGGQPWIDQAPVFLLFCADFNRAKIALEDLHDFKMEITNGLESVLVGAVDAGIALGTATAAAESLGLGTVPIGAVRGNPQELIELLELPKYVFPLSGLVIGHPADRSAKKPRLPQEAVNHQETYLNQDELTSHIQAYDEQMSEYMNKRTNGKETRNWSQSIASYYERLYYPHIREMLEKQGFKVEK.

FMN-binding positions include 11–15 (HRSIR), Gln-67, 134–136 (PIG), and 173–175 (KPR).

Belongs to the flavin oxidoreductase frp family. Homodimer.

It carries out the reaction FMNH2 + NADP(+) = FMN + NADPH + 2 H(+). It catalyses the reaction FMNH2 + NAD(+) = FMN + NADH + 2 H(+). Its activity is regulated as follows. FMN is a competitive inhibitor of NADH, and therefore leads to the preferential utilization of NADPH. Reduces FMNH(2) to FMN, with NADH or NADPH as reductant. It also reduces nitroaromatic compounds, quinones, chromates and azo dyes. It could supply the reduced form of FMN to luciferase-like protein and contribute to the degradation of aromatic compounds. The protein is FMN reductase [NAD(P)H] (nfrA2) of Bacillus subtilis (strain 168).